Consider the following 129-residue polypeptide: Fluoride-specific ion channel FluC 2 (129 aa).

The helical transmembrane segment at 19–39 threads the bilayer; it reads GLGLVVPAAAVGGFPLGTLFI. Positions 74 and 77 each coordinate Na(+). The helical transmembrane segment at 95 to 115 threads the bilayer; that stretch reads FGMAAVYIAASLFGGLLASWA.

The protein belongs to the fluoride channel Fluc/FEX (TC 1.A.43) family.

The protein resides in the cell membrane. The catalysed reaction is fluoride(in) = fluoride(out). Its activity is regulated as follows. Na(+) is not transported, but it plays an essential structural role and its presence is essential for fluoride channel function. Its function is as follows. Fluoride-specific ion channel. Important for reducing fluoride concentration in the cell, thus reducing its toxicity. The chain is Fluoride-specific ion channel FluC 2 from Geobacillus kaustophilus (strain HTA426).